We begin with the raw amino-acid sequence, 240 residues long: DNA repair protein RecO (240 aa).

It belongs to the RecO family.

Its function is as follows. Involved in DNA repair and RecF pathway recombination. In Pseudoalteromonas atlantica (strain T6c / ATCC BAA-1087), this protein is DNA repair protein RecO.